Consider the following 142-residue polypeptide: Large ribosomal subunit protein uL11 (142 aa).

It belongs to the universal ribosomal protein uL11 family. Part of the ribosomal stalk of the 50S ribosomal subunit. Interacts with L10 and the large rRNA to form the base of the stalk. L10 forms an elongated spine to which L12 dimers bind in a sequential fashion forming a multimeric L10(L12)X complex. In terms of processing, one or more lysine residues are methylated.

Its function is as follows. Forms part of the ribosomal stalk which helps the ribosome interact with GTP-bound translation factors. The chain is Large ribosomal subunit protein uL11 from Actinobacillus succinogenes (strain ATCC 55618 / DSM 22257 / CCUG 43843 / 130Z).